Consider the following 157-residue polypeptide: Protein Smg homolog (157 aa).

It belongs to the Smg family.

The polypeptide is Protein Smg homolog (Stenotrophomonas maltophilia (strain R551-3)).